Consider the following 158-residue polypeptide: Cytochrome c-type biogenesis protein CcmE (158 aa).

Topologically, residues 1-8 (MNIRRRRR) are cytoplasmic. Residues 9–29 (LLVVVAILVGLGLATGLVMYA) form a helical; Signal-anchor for type II membrane protein membrane-spanning segment. Residues 30-158 (LRSNIDLFYT…GLLNVSEPTR (129 aa)) lie on the Periplasmic side of the membrane. 2 residues coordinate heme: His-130 and Tyr-134.

Belongs to the CcmE/CycJ family.

The protein resides in the cell inner membrane. In terms of biological role, heme chaperone required for the biogenesis of c-type cytochromes. Transiently binds heme delivered by CcmC and transfers the heme to apo-cytochromes in a process facilitated by CcmF and CcmH. The protein is Cytochrome c-type biogenesis protein CcmE of Tatumella citrea (Pantoea citrea).